A 194-amino-acid polypeptide reads, in one-letter code: Holliday junction branch migration complex subunit RuvA (194 aa).

A domain I region spans residues 1–64 (MIARLSGILV…EDAQLLYGFG (64 aa)). A domain II region spans residues 65–141 (SDQERATFRQ…FAIDGGTALA (77 aa)). Residues 141-144 (AGSN) form a flexible linker region. A domain III region spans residues 145 to 194 (PAKSASSDVLNALLALGYNEREALAAVKQLPADIAVAEGIKLSLKSLSKT).

This sequence belongs to the RuvA family. In terms of assembly, homotetramer. Forms an RuvA(8)-RuvB(12)-Holliday junction (HJ) complex. HJ DNA is sandwiched between 2 RuvA tetramers; dsDNA enters through RuvA and exits via RuvB. An RuvB hexamer assembles on each DNA strand where it exits the tetramer. Each RuvB hexamer is contacted by two RuvA subunits (via domain III) on 2 adjacent RuvB subunits; this complex drives branch migration. In the full resolvosome a probable DNA-RuvA(4)-RuvB(12)-RuvC(2) complex forms which resolves the HJ.

The protein resides in the cytoplasm. In terms of biological role, the RuvA-RuvB-RuvC complex processes Holliday junction (HJ) DNA during genetic recombination and DNA repair, while the RuvA-RuvB complex plays an important role in the rescue of blocked DNA replication forks via replication fork reversal (RFR). RuvA specifically binds to HJ cruciform DNA, conferring on it an open structure. The RuvB hexamer acts as an ATP-dependent pump, pulling dsDNA into and through the RuvAB complex. HJ branch migration allows RuvC to scan DNA until it finds its consensus sequence, where it cleaves and resolves the cruciform DNA. This Methylobacillus flagellatus (strain ATCC 51484 / DSM 6875 / VKM B-1610 / KT) protein is Holliday junction branch migration complex subunit RuvA.